The chain runs to 395 residues: Forkhead box protein I3 (395 aa).

Positions 131–225 form a DNA-binding region, fork-head; it reads RPPYSYSALI…DNGNFRRKRK (95 aa). Disordered regions lie at residues 216–288 and 322–370; these read DNGN…GIIS and RNFS…SSGS. Residues 221–227 carry the Nuclear localization signal motif; the sequence is RRKRKRR. A compositionally biased stretch (low complexity) spans 234-245; the sequence is ATTAAASSLGGL. Residues 325-335 show a composition bias toward polar residues; that stretch reads SAGQLSGGTFT. Residues 336–349 show a composition bias toward low complexity; the sequence is PSSSSSQEVPSPEQ.

Initially expressed in the pre-placodal ectoderm surrounding the neural plate, which will give rise to all craniofacial sensory organs. Expression then becomes restricted to a region immediately anterior to the first pair of somites that will give rise to the otic and epibranchial placodes, before becoming down-regulated from this region and restricted to the ectoderm and endoderm of the pharyngeal arches.

The protein localises to the nucleus. Functionally, transcription factor required for pharyngeal arch development, which is involved in otic placode development. The sequence is that of Forkhead box protein I3 from Gallus gallus (Chicken).